We begin with the raw amino-acid sequence, 436 residues long: Gamma-glutamyl phosphate reductase (436 aa).

The protein belongs to the gamma-glutamyl phosphate reductase family.

The protein localises to the cytoplasm. The catalysed reaction is L-glutamate 5-semialdehyde + phosphate + NADP(+) = L-glutamyl 5-phosphate + NADPH + H(+). It functions in the pathway amino-acid biosynthesis; L-proline biosynthesis; L-glutamate 5-semialdehyde from L-glutamate: step 2/2. Its function is as follows. Catalyzes the NADPH-dependent reduction of L-glutamate 5-phosphate into L-glutamate 5-semialdehyde and phosphate. The product spontaneously undergoes cyclization to form 1-pyrroline-5-carboxylate. The sequence is that of Gamma-glutamyl phosphate reductase from Prochlorococcus marinus (strain AS9601).